A 264-amino-acid polypeptide reads, in one-letter code: MDNRPIGFLDSGVGGLTVARELMRQLPHEEIVYIGDSARAPYGPRPAEQIREYTWQLVNFLLTKNVKMIVFACNTATAVVWEEVKEKLDIPVLGVILPGASAAIKATQTGKVGVLGTAMTIQSDIYREKIQALSPETQVDSLACPKFAPLVESNSHQSSLAKKVVYETLRPLVGQVDTLVLGCTHYPLLRPIIQNAMGKDVKLIDSGAECARDISVLLNYFQINRSRTEKDIQHRFYTTASPAAFKEIAESWMGIDIHVEHVEL.

Residues Asp-10–Ser-11 and Tyr-42–Gly-43 contribute to the substrate site. Residue Cys-73 is the Proton donor/acceptor of the active site. A substrate-binding site is contributed by Asn-74–Thr-75. Cys-183 acts as the Proton donor/acceptor in catalysis. Thr-184–His-185 lines the substrate pocket.

The protein belongs to the aspartate/glutamate racemases family.

It carries out the reaction L-glutamate = D-glutamate. Its pathway is cell wall biogenesis; peptidoglycan biosynthesis. Its function is as follows. Provides the (R)-glutamate required for cell wall biosynthesis. The chain is Glutamate racemase from Streptococcus suis (strain 98HAH33).